Reading from the N-terminus, the 223-residue chain is Cutinase 4 (223 aa).

The first 26 residues, 1-26, serve as a signal peptide directing secretion; sequence MPLPLLPPLLLPLEALLDLALHLVDS. C60 and C133 are oxidised to a cystine. The active-site Nucleophile is S144. Residues C187 and C194 are joined by a disulfide bond. D191 is a catalytic residue. H203 serves as the catalytic Proton donor/acceptor.

Belongs to the cutinase family. Post-translationally, the 2 disulfide bonds play a critical role in holding the catalytic residues in juxta-position; reduction of the disulfide bridges results in the complete inactivation of the enzyme.

The protein localises to the secreted. It catalyses the reaction cutin + H2O = cutin monomers.. Catalyzes the hydrolysis of complex carboxylic polyesters found in the cell wall of plants. Degrades cutin, a macromolecule that forms the structure of the plant cuticle. Also degrades suberin, a specialized macromolecule found in the cell wall of various plant tissues. In Emericella nidulans (strain FGSC A4 / ATCC 38163 / CBS 112.46 / NRRL 194 / M139) (Aspergillus nidulans), this protein is Cutinase 4.